A 214-amino-acid chain; its full sequence is Pyridoxine/pyridoxamine 5'-phosphate oxidase (214 aa).

Substrate-binding positions include 9-12 (RKSY) and lysine 67. FMN-binding positions include 62–67 (RIVLLK), 77–78 (YT), arginine 83, lysine 84, and glutamine 106. Tyrosine 124, arginine 128, and serine 132 together coordinate substrate. FMN contacts are provided by residues 141–142 (QS) and tryptophan 186. 192-194 (RLH) contributes to the substrate binding site. Arginine 196 serves as a coordination point for FMN.

Belongs to the pyridoxamine 5'-phosphate oxidase family. As to quaternary structure, homodimer. The cofactor is FMN.

The catalysed reaction is pyridoxamine 5'-phosphate + O2 + H2O = pyridoxal 5'-phosphate + H2O2 + NH4(+). It carries out the reaction pyridoxine 5'-phosphate + O2 = pyridoxal 5'-phosphate + H2O2. It functions in the pathway cofactor metabolism; pyridoxal 5'-phosphate salvage; pyridoxal 5'-phosphate from pyridoxamine 5'-phosphate: step 1/1. The protein operates within cofactor metabolism; pyridoxal 5'-phosphate salvage; pyridoxal 5'-phosphate from pyridoxine 5'-phosphate: step 1/1. Functionally, catalyzes the oxidation of either pyridoxine 5'-phosphate (PNP) or pyridoxamine 5'-phosphate (PMP) into pyridoxal 5'-phosphate (PLP). The protein is Pyridoxine/pyridoxamine 5'-phosphate oxidase of Leptospira interrogans serogroup Icterohaemorrhagiae serovar copenhageni (strain Fiocruz L1-130).